Consider the following 289-residue polypeptide: Probable endonuclease 4 (289 aa).

Zn(2+) contacts are provided by His-76, His-116, Glu-152, Asp-186, His-189, His-220, Asp-233, His-235, and Glu-265.

This sequence belongs to the AP endonuclease 2 family. The cofactor is Zn(2+).

The catalysed reaction is Endonucleolytic cleavage to 5'-phosphooligonucleotide end-products.. In terms of biological role, endonuclease IV plays a role in DNA repair. It cleaves phosphodiester bonds at apurinic or apyrimidinic (AP) sites, generating a 3'-hydroxyl group and a 5'-terminal sugar phosphate. The sequence is that of Probable endonuclease 4 from Malacoplasma penetrans (strain HF-2) (Mycoplasma penetrans).